The following is a 370-amino-acid chain: MKVYVLLVFLTLCSAKPLFHPSYLTLKNLMLKDMEDEGDSDADNSLFPTREPINPFFPFDLFSTCPFGCQCYSRVVHCSDLGLSSVPSNIPFDTRMVDLQNNKIKEIKENDFKGLTSLYALILNNNKLTKIHPKAFLTTKKLRRLYLSHNQLSEIPLNLPKSLAELRIHDNKVKKIQKATFKGMNALHVLEMSANPLDNNGIEPGAFEGVTVFHIRIAEAKLTSIPKELPSTLLELHLDYNKISVVELEDFKRYKDLQRLGLGNNRITDIENGSLANIPRVREIHLENNKLKKVPSGLQELKYLQIIFLHSNSITKVGVNDFCPTVPKMKKSLYSAISLSNNPVKYWEVQPATFRCVLSRMSVQLGNFRK.

Residues 1 to 15 (MKVYVLLVFLTLCSA) form the signal peptide. An O-linked (GalNAc...) serine glycan is attached at serine 45. The 37-residue stretch at 56-92 (FFPFDLFSTCPFGCQCYSRVVHCSDLGLSSVPSNIPF) folds into the LRRNT domain. Disulfide bonds link cysteine 65–cysteine 71 and cysteine 69–cysteine 78. 11 LRR repeats span residues 93 to 114 (DTRM…DFKG), 117 to 138 (SLYA…AFLT), 141 to 163 (KLRR…PKSL), 164 to 183 (AELR…TFKG), 186 to 209 (ALHV…AFEG), 232 to 253 (TLLE…DFKR), 256 to 277 (DLQR…SLAN), 280 to 302 (RVRE…QELK), 303 to 324 (YLQI…DFCP), 332 to 354 (SLYS…PATF), and 355 to 370 (RCVL…NFRK). N-linked (GlcNAc...) asparagine glycosylation occurs at asparagine 272. Cysteine 323 and cysteine 356 are disulfide-bonded.

Belongs to the small leucine-rich proteoglycan (SLRP) family. SLRP class I subfamily.

Its subcellular location is the secreted. It localises to the extracellular space. The protein resides in the extracellular matrix. The protein is Asporin (ASPN) of Bos taurus (Bovine).